We begin with the raw amino-acid sequence, 185 residues long: Prorelaxin 1 (185 aa).

Residues 1–22 (MSSRFLLQLLGFWLLLSQPCRT) form the signal peptide. Disulfide bonds link C36–C171, C48–C185, and C170–C175. Residues 58-156 (SQEEPALLAR…LKYLQSDTHS (99 aa)) constitute a propeptide, connecting peptide. The tract at residues 135–161 (RLGEAEDGSPPGLKYLQSDTHSRKKRE) is disordered.

It belongs to the insulin family. Heterodimer of a B chain and an A chain linked by two disulfide bonds.

Its subcellular location is the secreted. Its function is as follows. Relaxin is an ovarian hormone that acts with estrogen to produce dilatation of the birth canal in many mammals. This chain is Prorelaxin 1 (Rln1), found in Mus musculus (Mouse).